Consider the following 210-residue polypeptide: Large ribosomal subunit protein uL3 (210 aa).

The segment at 125–154 (RHGFRGGPKTHGQSDRHRAPGSIGAGTTPG) is disordered.

This sequence belongs to the universal ribosomal protein uL3 family. In terms of assembly, part of the 50S ribosomal subunit. Forms a cluster with proteins L14 and L19.

Functionally, one of the primary rRNA binding proteins, it binds directly near the 3'-end of the 23S rRNA, where it nucleates assembly of the 50S subunit. The polypeptide is Large ribosomal subunit protein uL3 (Chloroflexus aggregans (strain MD-66 / DSM 9485)).